A 479-amino-acid chain; its full sequence is GTPase Obg (479 aa).

The 158-residue stretch at 2–159 (PRFVDRVVIH…RDLTLELKTV (158 aa)) folds into the Obg domain. One can recognise an OBG-type G domain in the interval 160 to 340 (ADVGLVGFPS…LIFGLWQMVS (181 aa)). Residues 166-173 (GFPSAGKS), 191-195 (FTTLV), 212-215 (DVPG), 292-295 (NKID), and 321-323 (STV) each bind GTP. Residues Ser173 and Thr193 each coordinate Mg(2+). Residues 358–436 (PVPVDDSGFD…IGEMTFDWEP (79 aa)) enclose the OCT domain. Positions 438–479 (TPAGGHVAMSGRGTDVRLERSDRVGAAERKAARRQRRERDDD) are disordered. Residues 451 to 467 (TDVRLERSDRVGAAERK) show a composition bias toward basic and acidic residues.

The protein belongs to the TRAFAC class OBG-HflX-like GTPase superfamily. OBG GTPase family. As to quaternary structure, monomer. It depends on Mg(2+) as a cofactor.

Its subcellular location is the cytoplasm. Functionally, an essential GTPase which binds GTP, GDP and possibly (p)ppGpp with moderate affinity, with high nucleotide exchange rates and a fairly low GTP hydrolysis rate. Plays a role in control of the cell cycle, stress response, ribosome biogenesis and in those bacteria that undergo differentiation, in morphogenesis control. The chain is GTPase Obg from Mycobacterium ulcerans (strain Agy99).